Here is a 1174-residue protein sequence, read N- to C-terminus: Pecanex-like protein 4 (1174 aa).

14 helical membrane-spanning segments follow: residues 40–60, 72–92, 140–160, 173–193, 217–237, 244–264, 284–304, 307–327, 366–386, 394–414, 451–471, 543–563, 580–600, and 643–663; these read IYVN…TGTL, AAAL…LISV, TVFH…YLLP, TAVL…SLIV, LYIF…NIPA, ILHI…LPPP, SMST…AAVV, FIPS…LLSL, FLFI…HHYV, SGAQ…VWIL, IGAV…VAFL, LIQF…LWTE, VFAP…SPLL, and LTAA…LPGS. The segment covering 785 to 797 has biased composition (polar residues); that stretch reads PSTQENKTENTGE. The segment at 785–875 is disordered; the sequence is PSTQENKTEN…DDHSAGTGPK (91 aa). The N-linked (GlcNAc...) asparagine glycan is linked to Asn-790. The segment covering 798–810 has biased composition (low complexity); that stretch reads ASPALPPAANSSP. Residues 835 to 846 are compositionally biased toward basic and acidic residues; that stretch reads PAIKNRKEKLQS. 2 N-linked (GlcNAc...) asparagine glycosylation sites follow: Asn-1122 and Asn-1149.

It belongs to the pecanex family.

It is found in the membrane. The polypeptide is Pecanex-like protein 4 (Mus musculus (Mouse)).